Reading from the N-terminus, the 959-residue chain is Translation initiation factor IF-2 (959 aa).

Positions M1–T10 are enriched in basic and acidic residues. Residues M1–I374 form a disordered region. Positions E27–H37 are enriched in polar residues. Composition is skewed to low complexity over residues A63–P118 and Q128–P138. Basic and acidic residues-rich tracts occupy residues S154–K225 and A232–R241. A compositionally biased stretch (low complexity) spans G246–A284. A compositionally biased stretch (basic and acidic residues) spans P318 to R333. A tr-type G domain is found at S457–K626. Residues G466–T473 are G1. G466–T473 contributes to the GTP binding site. Residues G491–H495 are G2. Positions D512 to G515 are G3. Residues D512–H516 and N566–D569 each bind GTP. Positions N566–D569 are G4. The segment at S602–K604 is G5.

Belongs to the TRAFAC class translation factor GTPase superfamily. Classic translation factor GTPase family. IF-2 subfamily.

It is found in the cytoplasm. One of the essential components for the initiation of protein synthesis. Protects formylmethionyl-tRNA from spontaneous hydrolysis and promotes its binding to the 30S ribosomal subunits. Also involved in the hydrolysis of GTP during the formation of the 70S ribosomal complex. The sequence is that of Translation initiation factor IF-2 from Brucella canis (strain ATCC 23365 / NCTC 10854 / RM-666).